Consider the following 774-residue polypeptide: Multiple C2 domain and transmembrane region protein 11 (774 aa).

Over residues M1–D12 the composition is skewed to gly residues. The segment at M1–N30 is disordered. 3 C2 domains span residues G9 to Y145, V184 to Y307, and L338 to Y471. Residues D62, N110, D112, and D118 each coordinate Ca(2+). A run of 2 helical transmembrane segments spans residues L608–F628 and F722–F742.

The protein belongs to the MCTP family. It depends on Ca(2+) as a cofactor. As to expression, observed in flowers.

It is found in the endoplasmic reticulum membrane. May function as a signaling molecule by regulating the trafficking of other regulators. In Arabidopsis thaliana (Mouse-ear cress), this protein is Multiple C2 domain and transmembrane region protein 11.